A 625-amino-acid chain; its full sequence is Probable potassium transport system protein Kup (625 aa).

Helical transmembrane passes span 10–30 (LAAL…TSPL), 50–70 (LLGV…LKYV), 102–122 (YFPL…DSVI), 142–162 (FDPY…SVQA), 172–192 (FGPI…VNII), 215–235 (FLAF…EALY), 250–270 (WFLV…ALLL), 284–304 (LGAW…IIAS), 340–360 (IYIP…VVGF), 369–389 (AYGI…FFVI), 397–417 (LLLC…LFSA), and 422–442 (LFHG…LMLT).

Belongs to the HAK/KUP transporter (TC 2.A.72) family.

Its subcellular location is the cell inner membrane. The catalysed reaction is K(+)(in) + H(+)(in) = K(+)(out) + H(+)(out). Functionally, transport of potassium into the cell. Likely operates as a K(+):H(+) symporter. The sequence is that of Probable potassium transport system protein Kup from Janthinobacterium sp. (strain Marseille) (Minibacterium massiliensis).